Here is a 465-residue protein sequence, read N- to C-terminus: Glutamate--tRNA ligase (465 aa).

The short motif at 11–21 is the 'HIGH' region element; sequence PSPTGFIHLGN. Positions 243 to 247 match the 'KMSKS' region motif; it reads KMSKR. K246 serves as a coordination point for ATP.

This sequence belongs to the class-I aminoacyl-tRNA synthetase family. Glutamate--tRNA ligase type 1 subfamily. As to quaternary structure, monomer.

The protein resides in the cytoplasm. It carries out the reaction tRNA(Glu) + L-glutamate + ATP = L-glutamyl-tRNA(Glu) + AMP + diphosphate. Functionally, catalyzes the attachment of glutamate to tRNA(Glu) in a two-step reaction: glutamate is first activated by ATP to form Glu-AMP and then transferred to the acceptor end of tRNA(Glu). The protein is Glutamate--tRNA ligase of Cupriavidus metallidurans (strain ATCC 43123 / DSM 2839 / NBRC 102507 / CH34) (Ralstonia metallidurans).